A 130-amino-acid polypeptide reads, in one-letter code: S-adenosylmethionine decarboxylase proenzyme (130 aa).

Residue serine 64 is the Schiff-base intermediate with substrate; via pyruvic acid of the active site. Serine 64 is subject to Pyruvic acid (Ser); by autocatalysis. The active-site Proton acceptor; for processing activity is the histidine 69. The active-site Proton donor; for catalytic activity is cysteine 84.

The protein belongs to the prokaryotic AdoMetDC family. Type 1 subfamily. As to quaternary structure, heterotetramer of two alpha and two beta chains arranged as a dimer of alpha/beta heterodimers. Pyruvate serves as cofactor. Is synthesized initially as an inactive proenzyme. Formation of the active enzyme involves a self-maturation process in which the active site pyruvoyl group is generated from an internal serine residue via an autocatalytic post-translational modification. Two non-identical subunits are generated from the proenzyme in this reaction, and the pyruvate is formed at the N-terminus of the alpha chain, which is derived from the carboxyl end of the proenzyme. The post-translation cleavage follows an unusual pathway, termed non-hydrolytic serinolysis, in which the side chain hydroxyl group of the serine supplies its oxygen atom to form the C-terminus of the beta chain, while the remainder of the serine residue undergoes an oxidative deamination to produce ammonia and the pyruvoyl group blocking the N-terminus of the alpha chain.

The catalysed reaction is S-adenosyl-L-methionine + H(+) = S-adenosyl 3-(methylsulfanyl)propylamine + CO2. The protein operates within amine and polyamine biosynthesis; S-adenosylmethioninamine biosynthesis; S-adenosylmethioninamine from S-adenosyl-L-methionine: step 1/1. Its function is as follows. Catalyzes the decarboxylation of S-adenosylmethionine to S-adenosylmethioninamine (dcAdoMet), the propylamine donor required for the synthesis of the polyamines spermine and spermidine from the diamine putrescine. This chain is S-adenosylmethionine decarboxylase proenzyme, found in Thermoplasma volcanium (strain ATCC 51530 / DSM 4299 / JCM 9571 / NBRC 15438 / GSS1).